The chain runs to 1696 residues: Proprotein convertase subtilisin/kexin type 5 (1696 aa).

Residues 1-25 form the signal peptide; sequence MPPAIVILALFTAALCAVNLRTVAA. A propeptide spanning residues 26–110 is cleaved from the precursor; it reads DGPRIYRNEW…QQVVKRRVKR (85 aa). Residues 111 to 488 are catalytic; that stretch reads RVKRVYSMYP…GLMDAGKMVE (378 aa). The Extracellular segment spans residues 111–1618; it reads RVKRVYSMYP…ADSIPTNVAY (1508 aa). Positions 167 to 487 constitute a Peptidase S8 domain; that stretch reads QWSDMNVEAA…FGLMDAGKMV (321 aa). Catalysis depends on charge relay system residues Asp192 and His233. The N-linked (GlcNAc...) asparagine glycan is linked to Asn246. Ser407 functions as the Charge relay system in the catalytic mechanism. Residues 495–638 enclose the P/Homo B domain; the sequence is RVPEQHVCEE…KLILYGTAEH (144 aa). The N-linked (GlcNAc...) asparagine glycan is linked to Asn529. A compositionally biased stretch (basic and acidic residues) spans 643-657; sequence RDEESRPHTPQTREE. A disordered region spans residues 643–666; the sequence is RDEESRPHTPQTREEPTDEEECED. Residues 664–1649 are CRM (Cys-rich motif); that stretch reads CEDGDYYDRS…LQARSNGRLC (986 aa). N-linked (GlcNAc...) asparagine glycosylation is present at Asn885. A helical transmembrane segment spans residues 1619-1639; the sequence is IAVATFICVVIVVLFFVVFGM. Residues 1640 to 1696 lie on the Cytoplasmic side of the membrane; the sequence is LQARSNGRLCWAHKYQQVPTTRYEKMNDHVNILSQEDFYNEDSLSEDEIHSIDSTRH.

Belongs to the peptidase S8 family.

The protein resides in the secreted. It is found in the cell membrane. Its function is as follows. Serine endoprotease that processes various proproteins by cleavage at paired basic amino acids, recognizing the RXXX[KR]R consensus motif. Likely functions in the constitutive and regulated secretory pathways. The sequence is that of Proprotein convertase subtilisin/kexin type 5 (PC6) from Branchiostoma californiense (California lancelet).